A 231-amino-acid polypeptide reads, in one-letter code: Ion-translocating oxidoreductase complex subunit E (231 aa).

Transmembrane regions (helical) follow at residues 18–38, 39–59, 69–89, 93–113, 127–147, 157–177, and 182–202; these read GLVQLLGLCPLLAVTATITNA, LGLGVATLLVLIGSNVLVSLV, IPVFVMIIAALVTCVQLLINA, NLYLSLGIFLPLIVTNCVIIG, SAFDGLMMGLGFTAVLVVLGA, LFGGADLLLGDWASVLTIHVW, and PFLLAMLPPGAFIGMGLLIAL.

The protein belongs to the NqrDE/RnfAE family. In terms of assembly, the complex is composed of six subunits: RnfA, RnfB, RnfC, RnfD, RnfE and RnfG.

It localises to the cell inner membrane. In terms of biological role, part of a membrane-bound complex that couples electron transfer with translocation of ions across the membrane. The chain is Ion-translocating oxidoreductase complex subunit E from Shewanella frigidimarina (strain NCIMB 400).